Here is a 163-residue protein sequence, read N- to C-terminus: Sperm surface protein Sp17 (163 aa).

Disordered regions lie at residues 57–115 (PAEW…EKEE) and 129–163 (VAREEVKKMKTDSLQNEEKEENSEDTGFTSRTHEK). Composition is skewed to basic and acidic residues over residues 62-98 (SKVEDRFYNNHAFEEQEPPEKSDPKQEESQVSGKEEE) and 129-139 (VAREEVKKMKT). Residues 114–143 (EEVAAVKIQAAFRGHVAREEVKKMKTDSLQ) enclose the IQ domain. The segment covering 153–163 (DTGFTSRTHEK) has biased composition (polar residues).

In terms of assembly, homodimer. May interact with ROPN1. In terms of tissue distribution, testis- and sperm-specific.

It is found in the membrane. In terms of biological role, sperm surface zona pellucida binding protein. Helps to bind spermatozoa to the zona pellucida with high affinity. Might function in binding zona pellucida and carbohydrates. In Papio hamadryas (Hamadryas baboon), this protein is Sperm surface protein Sp17 (SPA17).